A 492-amino-acid polypeptide reads, in one-letter code: Ketol-acid reductoisomerase (NADP(+)) (492 aa).

One can recognise a KARI N-terminal Rossmann domain in the interval 17–208; that stretch reads LGQCRLMKKN…GSNKAGVLES (192 aa). NADP(+) contacts are provided by residues 45–48, Arg-68, Ser-76, and Ser-78; that span reads CGSQ. His-132 is a catalytic residue. An NADP(+)-binding site is contributed by Gly-158. 2 KARI C-terminal knotted domains span residues 209 to 344 and 345 to 487; these read SFVA…KAPV and YCET…MKDM. 4 residues coordinate Mg(2+): Asp-217, Glu-221, Glu-389, and Glu-393. Ser-414 is a substrate binding site.

The protein belongs to the ketol-acid reductoisomerase family. Mg(2+) is required as a cofactor.

It carries out the reaction (2R)-2,3-dihydroxy-3-methylbutanoate + NADP(+) = (2S)-2-acetolactate + NADPH + H(+). The catalysed reaction is (2R,3R)-2,3-dihydroxy-3-methylpentanoate + NADP(+) = (S)-2-ethyl-2-hydroxy-3-oxobutanoate + NADPH + H(+). It participates in amino-acid biosynthesis; L-isoleucine biosynthesis; L-isoleucine from 2-oxobutanoate: step 2/4. Its pathway is amino-acid biosynthesis; L-valine biosynthesis; L-valine from pyruvate: step 2/4. Its function is as follows. Involved in the biosynthesis of branched-chain amino acids (BCAA). Catalyzes an alkyl-migration followed by a ketol-acid reduction of (S)-2-acetolactate (S2AL) to yield (R)-2,3-dihydroxy-isovalerate. In the isomerase reaction, S2AL is rearranged via a Mg-dependent methyl migration to produce 3-hydroxy-3-methyl-2-ketobutyrate (HMKB). In the reductase reaction, this 2-ketoacid undergoes a metal-dependent reduction by NADPH to yield (R)-2,3-dihydroxy-isovalerate. In Blochmanniella floridana, this protein is Ketol-acid reductoisomerase (NADP(+)).